The sequence spans 225 residues: Enolase-phosphatase E1 (225 aa).

It belongs to the HAD-like hydrolase superfamily. MasA/MtnC family. In terms of assembly, monomer. Requires Mg(2+) as cofactor.

It carries out the reaction 5-methylsulfanyl-2,3-dioxopentyl phosphate + H2O = 1,2-dihydroxy-5-(methylsulfanyl)pent-1-en-3-one + phosphate. It participates in amino-acid biosynthesis; L-methionine biosynthesis via salvage pathway; L-methionine from S-methyl-5-thio-alpha-D-ribose 1-phosphate: step 3/6. It functions in the pathway amino-acid biosynthesis; L-methionine biosynthesis via salvage pathway; L-methionine from S-methyl-5-thio-alpha-D-ribose 1-phosphate: step 4/6. In terms of biological role, bifunctional enzyme that catalyzes the enolization of 2,3-diketo-5-methylthiopentyl-1-phosphate (DK-MTP-1-P) into the intermediate 2-hydroxy-3-keto-5-methylthiopentenyl-1-phosphate (HK-MTPenyl-1-P), which is then dephosphorylated to form the acireductone 1,2-dihydroxy-3-keto-5-methylthiopentene (DHK-MTPene). The sequence is that of Enolase-phosphatase E1 from Shewanella denitrificans (strain OS217 / ATCC BAA-1090 / DSM 15013).